The sequence spans 319 residues: Fiber protein (319 aa).

Shaft repeat units follow at residues 44–73 (GVLSLKCVNPLTTASGSLQLKVGSGLTVDT) and 82–103 (IKVNTPLTKSNHSINLPIGNGL).

This sequence belongs to the adenoviridae fiber family. Homotrimer. Interacts with host receptor CD46. Interacts (via N-terminal tail region) with pentons.

The protein resides in the virion. Its subcellular location is the host nucleus. Forms spikes that protrude from each vertex of the icosahedral capsid. Interacts with host receptor CD46 to provide virion initial attachment to target cell. Fiber proteins are shed during virus entry, when virus is still at the cell surface. Heparan sulfate might also play a role in virus binding. In Homo sapiens (Human), this protein is Fiber protein.